Reading from the N-terminus, the 373-residue chain is Chaperone protein DnaJ (373 aa).

A J domain is found at 5–70 (DYYEVLGLQK…EKKSNYDQFG (66 aa)). The CR-type zinc finger occupies 132 to 214 (GVEKEITVNR…CRGNGNVRKT (83 aa)). Cys145, Cys148, Cys162, Cys165, Cys188, Cys191, Cys202, and Cys205 together coordinate Zn(2+). CXXCXGXG motif repeat units lie at residues 145–152 (CEHCNGSG), 162–169 (CPTCSGTG), 188–195 (CDRCSGTG), and 202–209 (CTHCRGNG).

Belongs to the DnaJ family. As to quaternary structure, homodimer. It depends on Zn(2+) as a cofactor.

Its subcellular location is the cytoplasm. In terms of biological role, participates actively in the response to hyperosmotic and heat shock by preventing the aggregation of stress-denatured proteins and by disaggregating proteins, also in an autonomous, DnaK-independent fashion. Unfolded proteins bind initially to DnaJ; upon interaction with the DnaJ-bound protein, DnaK hydrolyzes its bound ATP, resulting in the formation of a stable complex. GrpE releases ADP from DnaK; ATP binding to DnaK triggers the release of the substrate protein, thus completing the reaction cycle. Several rounds of ATP-dependent interactions between DnaJ, DnaK and GrpE are required for fully efficient folding. Also involved, together with DnaK and GrpE, in the DNA replication of plasmids through activation of initiation proteins. This Clostridium botulinum (strain Eklund 17B / Type B) protein is Chaperone protein DnaJ.